We begin with the raw amino-acid sequence, 249 residues long: Probable transcriptional regulatory protein Meso_3192 (249 aa).

This sequence belongs to the TACO1 family.

Its subcellular location is the cytoplasm. This chain is Probable transcriptional regulatory protein Meso_3192, found in Chelativorans sp. (strain BNC1).